Here is a 320-residue protein sequence, read N- to C-terminus: N-acetylneuraminate lyase (320 aa).

Residues T51 and T52 each coordinate aceneuramate. The active-site Proton donor is Y143. K173 acts as the Schiff-base intermediate with substrate in catalysis. Positions 175, 199, 201, 202, and 218 each coordinate aceneuramate.

The protein belongs to the DapA family. NanA subfamily. Homotetramer. In terms of tissue distribution, isoform 2 is expressed in placenta, liver, kidney, pancreas, spleen, thymus, ovary, small intestine and peripheral blood leukocyte.

The protein localises to the cytoplasm. The catalysed reaction is aceneuramate = aldehydo-N-acetyl-D-mannosamine + pyruvate. Its pathway is amino-sugar metabolism; N-acetylneuraminate degradation. Its function is as follows. Catalyzes the cleavage of N-acetylneuraminic acid (sialic acid) to form pyruvate and N-acetylmannosamine via a Schiff base intermediate. It prevents sialic acids from being recycled and returning to the cell surface. Involved in the N-glycolylneuraminic acid (Neu5Gc) degradation pathway. Although human is not able to catalyze formation of Neu5Gc due to the inactive CMAHP enzyme, Neu5Gc is present in food and must be degraded. This is N-acetylneuraminate lyase from Homo sapiens (Human).